Consider the following 393-residue polypeptide: Lipid-A-disaccharide synthase (393 aa).

It belongs to the LpxB family.

It catalyses the reaction a lipid X + a UDP-2-N,3-O-bis[(3R)-3-hydroxyacyl]-alpha-D-glucosamine = a lipid A disaccharide + UDP + H(+). It functions in the pathway bacterial outer membrane biogenesis; LPS lipid A biosynthesis. Functionally, condensation of UDP-2,3-diacylglucosamine and 2,3-diacylglucosamine-1-phosphate to form lipid A disaccharide, a precursor of lipid A, a phosphorylated glycolipid that anchors the lipopolysaccharide to the outer membrane of the cell. The sequence is that of Lipid-A-disaccharide synthase from Bordetella petrii (strain ATCC BAA-461 / DSM 12804 / CCUG 43448).